The sequence spans 135 residues: Transcriptional regulator HosA (135 aa).

The HTH marR-type domain occupies 4-134 (RNKAFHQLRQ…FMQLVRKMMN (131 aa)). The H-T-H motif DNA-binding region spans 48–71 (QVALIEAAVSTKATLAEMLARMEN).

Functionally, involved in the temperature-dependent positive control of flagellum-driven swimming motility and cellular aggregation. Regulates fliC expression by directly interacting with fliC promoter. In Escherichia coli O127:H6 (strain E2348/69 / EPEC), this protein is Transcriptional regulator HosA (hosA).